We begin with the raw amino-acid sequence, 84 residues long: Small ribosomal subunit protein uS17 (84 aa).

The protein belongs to the universal ribosomal protein uS17 family. Part of the 30S ribosomal subunit.

Its function is as follows. One of the primary rRNA binding proteins, it binds specifically to the 5'-end of 16S ribosomal RNA. This chain is Small ribosomal subunit protein uS17, found in Alkaliphilus oremlandii (strain OhILAs) (Clostridium oremlandii (strain OhILAs)).